The chain runs to 704 residues: Mannan-binding lectin serine protease 1 (704 aa).

Residues 1-24 form the signal peptide; sequence MRFLSFRRLLLYHVLCLTLTEVSA. The CUB 1 domain maps to 25-143; it reads HTVELNEMFG…TGFDAHYMAV (119 aa). Residues 25–189 are homodimerization; the sequence is HTVELNEMFG…HTDNRTCRVE (165 aa). The interval 25-189 is interaction with MBL2; the sequence is HTVELNEMFG…HTDNRTCRVE (165 aa). The interval 25-283 is interaction with FCN2; it reads HTVELNEMFG…STQSHSIQIL (259 aa). The tract at residues 25 to 305 is interaction with MBL1; the sequence is HTVELNEMFG…RLSYRAAGNE (281 aa). Asn54 is a glycosylation site (N-linked (GlcNAc...) asparagine). The Ca(2+) site is built by Glu73, Asp81, Asp126, Ser128, Asp144, Val145, and Glu147. A disulfide bridge links Cys78 with Cys96. Positions 144–187 constitute an EGF-like; calcium-binding domain; that stretch reads DVDECKEREDEELSCDHYCHNYIGGYYCSCRFGYILHTDNRTCR. 4 disulfide bridges follow: Cys148–Cys162, Cys158–Cys171, Cys173–Cys186, and Cys190–Cys217. Ca(2+) contacts are provided by Asn164, Tyr165, and Gly168. A (3R)-3-hydroxyasparagine modification is found at Asn164. The N-linked (GlcNAc...) asparagine glycan is linked to Asn183. The CUB 2 domain maps to 190–302; the sequence is CSGNLFTQRT…RGWRLSYRAA (113 aa). Ca(2+)-binding residues include Glu240, Asp250, Asp287, and Ser289. Residues Cys247 and Cys265 are joined by a disulfide bond. Sushi domains are found at residues 304-369 and 370-439; these read NECP…TCKI and VDCG…TCLP. 6 disulfide bridges follow: Cys306–Cys354, Cys334–Cys367, Cys372–Cys419, Cys402–Cys437, Cys441–Cys577, and Cys480–Cys496. Residues Asn390 and Asn412 are each glycosylated (N-linked (GlcNAc...) asparagine). The Peptidase S1 domain occupies 454–701; the sequence is IFNGRPAQKG…NKDWIQRVTG (248 aa). Catalysis depends on His495, which acts as the Charge relay system. N-linked (GlcNAc...) asparagine glycosylation occurs at Leu538. The active-site Charge relay system is Asp557. The N-linked (GlcNAc...) asparagine glycan is linked to Glu604. Cystine bridges form between Cys619/Cys636 and Cys647/Cys677. The Charge relay system role is filled by Ser651.

It belongs to the peptidase S1 family. As to quaternary structure, homodimer. Interacts with the oligomeric lectins MBL2, FCN2 and FCN3; triggers the lectin pathway of complement through activation of C3. Interacts with SERPING1. Interacts with COLEC11; probably triggers the lectin pathway of complement. In terms of processing, the iron and 2-oxoglutarate dependent 3-hydroxylation of aspartate and asparagine is (R) stereospecific within EGF domains. N-glycosylated. Some N-linked glycan are of the complex-type. Post-translationally, autoproteolytic processing of the proenzyme produces the active enzyme composed on the heavy and the light chain held together by a disulfide bond. Isoform 1 but not isoform 2 is activated through autoproteolytic processing. As to expression, protein of the plasma which is primarily expressed by liver.

Its subcellular location is the secreted. With respect to regulation, inhibited by SERPING1 and A2M. Its function is as follows. Functions in the lectin pathway of complement, which performs a key role in innate immunity by recognizing pathogens through patterns of sugar moieties and neutralizing them. The lectin pathway is triggered upon binding of mannan-binding lectin (MBL) and ficolins to sugar moieties which leads to activation of the associated proteases MASP1 and MASP2. Functions as an endopeptidase and may activate MASP2 or C2 or directly activate C3 the key component of complement reaction. Isoform 2 may have an inhibitory effect on the activation of the lectin pathway of complement or may cleave IGFBP5. Also plays a role in development. This Rattus norvegicus (Rat) protein is Mannan-binding lectin serine protease 1 (Masp1).